A 133-amino-acid chain; its full sequence is Small ribosomal subunit protein uS9 (133 aa).

This sequence belongs to the universal ribosomal protein uS9 family.

The protein is Small ribosomal subunit protein uS9 of Ureaplasma urealyticum serovar 10 (strain ATCC 33699 / Western).